A 339-amino-acid chain; its full sequence is Polyhydroxybutyrate depolymerase (339 aa).

A signal peptide spans 1–20 (MFDSVKIAWLVALGAAQVAA). Residue Ser-39 is part of the active site. A disulfide bridge connects residues Cys-70 and Cys-79. Asp-121 is a catalytic residue. The N-linked (GlcNAc...) asparagine glycan is linked to Asn-144. Residue His-155 is part of the active site. 3 disulfides stabilise this stretch: Cys-169–Cys-180, Cys-234–Cys-241, and Cys-250–Cys-304. Trp-307 contacts (3R)-hydroxybutanoate trimer.

The protein belongs to the carbohydrate esterase 1 (CE1) family.

The protein resides in the secreted. The enzyme catalyses [(3R)-hydroxybutanoate](n) + H2O = [(3R)-hydroxybutanoate](n-1) + (R)-3-hydroxybutanoate + H(+). With respect to regulation, the enzyme is completely inhibited by dithiothreitol (DTT) and diisopropylfluorophosphate (DFP), and partially inhibited by HgCl(2) and by enzyme3-(p-nitrophenoxy)propane (EPNP). Activity is not affected by N-ethylmaleimide (NEM) or phenylmethylsulfonyl fluoride (PMSF). Esterase involved in the hydrolysis of polyhydroxybutyrate, a microbial polyester that can be produced from renewable resources. The protein is Polyhydroxybutyrate depolymerase of Talaromyces funiculosus (Fruitlet core rot fungus).